The sequence spans 242 residues: MYQKSLLFSLLASSALAAQFPIPDSKGSVTFDEPYEIAAGETYDGGYKTYGRGVSCTGQSEGGQDDTVFIVQEGGTLKNAIIGSDQIEGVYCLGACTIENVWWEAVCEDALSLKGGSGPYNIIGGGAQGADDKVIQHNSGGQVNIDGFTVYDFGKLYRSCGNCDEQYARTVTIKNVVANSGKTLVGINSNLGDTASIDSSTCATDVKKICVEYKGNDTGAEPEEISEGPSDACQYSEPLSSC.

Residues 1–17 (MYQKSLLFSLLASSALA) form the signal peptide. Asparagine 216 is a glycosylation site (N-linked (GlcNAc...) asparagine). Positions 217 to 242 (DTGAEPEEISEGPSDACQYSEPLSSC) are disordered.

It belongs to the polysaccharide lyase 3 family. Requires Ca(2+) as cofactor.

Its subcellular location is the secreted. The catalysed reaction is Eliminative cleavage of (1-&gt;4)-alpha-D-galacturonan to give oligosaccharides with 4-deoxy-alpha-D-galact-4-enuronosyl groups at their non-reducing ends.. Pectinolytic enzyme consist of four classes of enzymes: pectin lyase, polygalacturonase, pectin methylesterase and rhamnogalacturonase. Among pectinolytic enzymes, pectin lyase is the most important in depolymerization of pectin, since it cleaves internal glycosidic bonds of highly methylated pectins. Favors pectate, the anion, over pectin, the methyl ester. The chain is Probable pectate lyase D (plyD) from Aspergillus fumigatus (strain CBS 144.89 / FGSC A1163 / CEA10) (Neosartorya fumigata).